Here is a 103-residue protein sequence, read N- to C-terminus: Ig lambda chain C region (103 aa).

Positions 6 to 99 (PTITLFPPSK…NGTSITKTLK (94 aa)) constitute an Ig-like domain. A disulfide bridge connects residues Cys28 and Cys85.

The chain is Ig lambda chain C region from Gallus gallus (Chicken).